Here is a 182-residue protein sequence, read N- to C-terminus: Adenine phosphoribosyltransferase 4 (182 aa).

It belongs to the purine/pyrimidine phosphoribosyltransferase family. As to quaternary structure, homodimer.

Its subcellular location is the cytoplasm. It catalyses the reaction AMP + diphosphate = 5-phospho-alpha-D-ribose 1-diphosphate + adenine. It functions in the pathway purine metabolism; AMP biosynthesis via salvage pathway; AMP from adenine: step 1/1. Its function is as follows. Catalyzes a salvage reaction resulting in the formation of AMP, that is energically less costly than de novo synthesis. May contribute to the recycling of adenine into adenylate nucleotides and the inactivation of cytokinins by phosphoribosylation. Possesses low activity toward adenine, but can efficiently convert cytokinins from free bases (active form) to the corresponding nucleotides (inactive form). This is Adenine phosphoribosyltransferase 4 (APT4) from Arabidopsis thaliana (Mouse-ear cress).